Consider the following 713-residue polypeptide: Leucine-rich repeat-containing protein 4B (713 aa).

The N-terminal stretch at 1-35 (MARARGSPCPPLPPGRMSWPHGALLFLWLFSPPLG) is a signal peptide. The Extracellular segment spans residues 36 to 576 (AGGGGVAVTS…DLDDVMKTTK (541 aa)). The LRRNT domain maps to 48-86 (GGGSPPATSCPVACSCSNQASRVICTRRDLAEVPASIPV). LRR repeat units follow at residues 87 to 108 (NTRY…TFKH), 111 to 132 (HLEI…AFNG), 135 to 156 (SLNT…AFEY), 159 to 180 (KLRE…AFNR), 183 to 205 (SLRR…AFEG), 208 to 229 (NLRY…TALV), 230 to 251 (RLEE…SFQG), 254 to 275 (SLRK…AFDD), and 278 to 299 (SLEE…LFTP). Asn224 carries an N-linked (GlcNAc...) asparagine glycan. 8 N-linked (GlcNAc...) asparagine glycosylation sites follow: Asn283, Asn333, Asn374, Asn400, Asn422, Asn425, Asn444, and Asn452. One can recognise an LRRCT domain in the interval 311–363 (NPWHCNCDVLWLSWWLKETVPSNTTCCARCHAPAGLKGRYIGELDQSHFTCYA). Residues 364-452 (PVIVEPPTDL…GNTTASATLN (89 aa)) enclose the Ig-like C2-type domain. The cysteines at positions 385 and 436 are disulfide-linked. The interval 497–551 (TQPGEEALQPRGTEKEPPGPTTDGVWGGGRPGDAAGPASSSTTAPAPRSSRPTEK) is disordered. Positions 528–546 (GDAAGPASSSTTAPAPRSS) are enriched in low complexity. A helical transmembrane segment spans residues 577–597 (IIIGCFVAITFMAAVMLVAFY). Topologically, residues 598–713 (KLRKQHQLHK…SKENVQETQI (116 aa)) are cytoplasmic. Residue Ser693 is modified to Phosphoserine. Positions 694-713 (IHEPLLFKSGSKENVQETQI) are disordered. The segment covering 703–713 (GSKENVQETQI) has biased composition (basic and acidic residues).

In terms of assembly, interacts with PTPRF. Interacts with DLG4. N-glycosylated. O-glycosylated; contains sialic acid.

Its subcellular location is the membrane. The protein resides in the presynaptic cell membrane. Functionally, synaptic adhesion protein. Regulates the formation of excitatory synapses. The trans-synaptic adhesion between LRRC4B and PTPRF regulates the formation of excitatory synapses in a bidirectional manner. In Homo sapiens (Human), this protein is Leucine-rich repeat-containing protein 4B (LRRC4B).